The primary structure comprises 505 residues: Exoglucanase 1 (505 aa).

The signal sequence occupies residues Met-1–Ala-17. Gln-18 is modified (pyrrolidone carboxylic acid). Residues Gln-18–Asn-449 form a catalytic region. 4 disulfide bridges follow: Cys-21-Cys-88, Cys-36-Cys-41, Cys-66-Cys-87, and Cys-77-Cys-83. N-linked (GlcNAc...) asparagine glycans are attached at residues Asn-93 and Asn-126. 6 disulfides stabilise this stretch: Cys-151–Cys-410, Cys-185–Cys-223, Cys-189–Cys-222, Cys-243–Cys-269, Cys-251–Cys-256, and Cys-274–Cys-344. Glu-225 (nucleophile) is an active-site residue. Glu-230 acts as the Proton donor/acceptor in catalysis. N-linked (GlcNAc...) asparagine glycosylation is found at Asn-283 and Asn-397. Disordered stretches follow at residues Thr-399–Gln-423 and Gly-440–Thr-472. Positions Ser-409–Gln-423 are enriched in polar residues. A compositionally biased stretch (low complexity) spans Gly-447–Thr-470. Residues Pro-450–Thr-468 are linker. In terms of domain architecture, CBM1 spans Ala-469–Leu-505.

The protein belongs to the glycosyl hydrolase 7 (cellulase C) family. In terms of processing, O-glycosylated. O-glycosylation of the cellulase linker provides protection from proteolysis. Linker glycans also contribute to binding affinity of cellobiohydrolases to cellulose.

Its subcellular location is the secreted. The enzyme catalyses Hydrolysis of (1-&gt;4)-beta-D-glucosidic linkages in cellulose and cellotetraose, releasing cellobiose from the non-reducing ends of the chains.. In terms of biological role, exocellobiohydrolases (CBH) that catalyzes the hydrolysis of 1,4-beta-D-glucosidic bonds in cellulose to release the disaccharide cellobiose. The degradation of cellulose involves an interplay between different cellulolytic enzymes. Hydrolysis starts with endoglucanases (EGs), which cut internal beta-1,4-glucosidic bonds in cellulose to reduce the polymerization degree of the substrate and create new chain ends for exocellobiohydrolases (CBHs). The CBHs release the disaccharide cellobiose from the non-reducing end of the cellulose polymer chain. Finally, beta-1,4-glucosidases hydrolyze the cellobiose and other short cello-oligosaccharides into glucose units. The polypeptide is Exoglucanase 1 (cbh1) (Trichoderma harzianum (Hypocrea lixii)).